Consider the following 511-residue polypeptide: BAR/IMD domain-containing adapter protein 2-like 1 (511 aa).

Residues 1 to 249 (MSRGPEEVNR…MNMIEEIKTP (249 aa)) enclose the IMD domain. Positions 115–154 (MNATLKRYQTEHKNKLESLEKSQAELKKIRRKSQGSRNAL) form a coiled coil. Phosphothreonine is present on residues T248 and T257. S261 and S281 each carry phosphoserine. A disordered region spans residues 302–328 (NNPATAAPNSQRVNNSTGTSEDPSLQR). The span at 303-328 (NPATAAPNSQRVNNSTGTSEDPSLQR) shows a compositional bias: polar residues. Residues S331 and S354 each carry the phosphoserine modification. Residues 339-402 (MKKQKVKTIF…PSSYTKLLEE (64 aa)) enclose the SH3 domain. T412 carries the post-translational modification Phosphothreonine. 3 positions are modified to phosphoserine: S414, S420, and S422. A disordered region spans residues 451 to 511 (RRADSARTTS…TNDRSAPIIR (61 aa)). The segment at 483–511 (PPFLSGENPFATVKLRPTVTNDRSAPIIR) is binds F-actin.

In terms of assembly, interacts with RAC1. Binds to F-actin. Interacts with FASLG. Interacts (via SH3 domain) with E.coli effector protein EspF(U) (via PXXP motifs). Identified in a complex containing at least WASL, BAIAP2L1 and E.coli EspF(U). Interacts with E.coli intimin receptor Tir. In terms of processing, phosphorylated on tyrosine in response to insulin.

It localises to the cytoplasm. The protein resides in the cytoskeleton. Functionally, may function as adapter protein. Involved in the formation of clusters of actin bundles. Plays a role in the reorganization of the actin cytoskeleton in response to bacterial infection. This Homo sapiens (Human) protein is BAR/IMD domain-containing adapter protein 2-like 1 (BAIAP2L1).